The sequence spans 347 residues: Probable ribonucleotide transport ATP-binding protein mkl (347 aa).

The ABC transporter domain occupies 16-252; the sequence is IEVKGLTKSF…DEPVVRQFLN (237 aa). 48-55 contacts ATP; sequence GPSGTGKS.

The protein belongs to the ABC transporter superfamily.

Functionally, not known, could be involved in the transport of ribonucleotides. The chain is Probable ribonucleotide transport ATP-binding protein mkl (mkl) from Mycobacterium leprae (strain TN).